We begin with the raw amino-acid sequence, 346 residues long: MEKLARKQVQALTPYLSARRIGGSGDVWLNANESPFDNEYQFNFARLNRYSECQPPELINAYAAYAKVKPEQVLTSRGADEGIELLVRAFCEPNQDAILYCPPTYGMYSISAETIGVETKTVPLTSNWQLDLPAIEASLENVKVVFVCSPNNPTGNIVDRKDILSLLEMTKDRAIVVMDEAYIDFCMEKSTVDLLVDYPHLAILRTLSKAFALAGLRCGFTLANEELINVLLKVIAPYPVPVPVAEIATQALSEAGLARMKYQMLDLSANRAYLQAGLMVLPGVTVFEGWGNYLLVKFPDGDSVFKAAWDHGIILRNSPIENCVRISVGNREECEKTLGFIRNQLI.

The residue at position 209 (K209) is an N6-(pyridoxal phosphate)lysine.

It belongs to the class-II pyridoxal-phosphate-dependent aminotransferase family. Histidinol-phosphate aminotransferase subfamily. As to quaternary structure, homodimer. Pyridoxal 5'-phosphate is required as a cofactor.

It catalyses the reaction L-histidinol phosphate + 2-oxoglutarate = 3-(imidazol-4-yl)-2-oxopropyl phosphate + L-glutamate. It functions in the pathway amino-acid biosynthesis; L-histidine biosynthesis; L-histidine from 5-phospho-alpha-D-ribose 1-diphosphate: step 7/9. The sequence is that of Histidinol-phosphate aminotransferase from Aliivibrio fischeri (strain ATCC 700601 / ES114) (Vibrio fischeri).